The sequence spans 454 residues: Phosphoglucosamine mutase (454 aa).

Catalysis depends on serine 101, which acts as the Phosphoserine intermediate. Mg(2+)-binding residues include serine 101, aspartate 243, aspartate 245, and aspartate 247. A Phosphoserine modification is found at serine 101.

The protein belongs to the phosphohexose mutase family. Mg(2+) serves as cofactor. Post-translationally, activated by phosphorylation.

It carries out the reaction alpha-D-glucosamine 1-phosphate = D-glucosamine 6-phosphate. Functionally, catalyzes the conversion of glucosamine-6-phosphate to glucosamine-1-phosphate. This chain is Phosphoglucosamine mutase, found in Geotalea uraniireducens (strain Rf4) (Geobacter uraniireducens).